Consider the following 336-residue polypeptide: L-rhamnono-gamma-lactonase (336 aa).

This sequence belongs to the metallo-dependent hydrolases superfamily. It depends on a divalent metal cation as a cofactor.

The catalysed reaction is L-rhamnono-1,4-lactone + H2O = L-rhamnonate + H(+). Inhibited by Zn(2+), Fe(2+) and Cu(2+), but not by EDTA. Its function is as follows. Hydrolase with high substrate specificity for L-rhamnono-1,4-lactone. Catalyzes the second step in an alternative pathway for rhamnose utilization that does not involve phosphorylated intermediates. The chain is L-rhamnono-gamma-lactonase (LRA2) from Scheffersomyces stipitis (strain ATCC 58785 / CBS 6054 / NBRC 10063 / NRRL Y-11545) (Yeast).